A 542-amino-acid chain; its full sequence is Beta-fructofuranosidase, insoluble isoenzyme 5 (542 aa).

Substrate-binding positions include 50–53 (WQND), Gln69, Trp77, and 114–115 (WS). Residue Asp53 is part of the active site. Asn142 carries N-linked (GlcNAc...) asparagine glycosylation. Substrate-binding positions include 178–179 (RD) and Glu233. A disulfide bridge links Cys389 with Cys436. 2 N-linked (GlcNAc...) asparagine glycosylation sites follow: Asn510 and Asn516.

Belongs to the glycosyl hydrolase 32 family. As to expression, expressed in roots and leaves.

It is found in the secreted. The protein localises to the extracellular space. It localises to the apoplast. The protein resides in the cell wall. The catalysed reaction is Hydrolysis of terminal non-reducing beta-D-fructofuranoside residues in beta-D-fructofuranosides.. In terms of biological role, may play a role in stress response. The polypeptide is Beta-fructofuranosidase, insoluble isoenzyme 5 (CIN5) (Oryza sativa subsp. japonica (Rice)).